Here is a 132-residue protein sequence, read N- to C-terminus: Large ribosomal subunit protein uL14 (132 aa).

This sequence belongs to the universal ribosomal protein uL14 family. Part of the 50S ribosomal subunit. Forms a cluster with proteins L3 and L24e, part of which may contact the 16S rRNA in 2 intersubunit bridges.

Functionally, binds to 23S rRNA. Forms part of two intersubunit bridges in the 70S ribosome. In Methanospirillum hungatei JF-1 (strain ATCC 27890 / DSM 864 / NBRC 100397 / JF-1), this protein is Large ribosomal subunit protein uL14.